A 196-amino-acid chain; its full sequence is MTTTHPALTAGRPAGYVPRLKQYYREHVVPALREQFGYRNVMQVPTLVKVVVNMGVGEAARDAKLIEGAVRDIAAITGQRPAIARARKSIAQFKLRAGMAIGAYATVRGDRMWEFLDRMLTLALPRIRDFRGLSPKQFDGHGNYTFGLTEQVMFHEVDQDKLDRFRGMDITVVTTARTDDEGRALLRHLGFPFREN.

This sequence belongs to the universal ribosomal protein uL5 family. In terms of assembly, part of the 50S ribosomal subunit; part of the 5S rRNA/L5/L18/L25 subcomplex. Contacts the 5S rRNA and the P site tRNA. Forms a bridge to the 30S subunit in the 70S ribosome.

Its function is as follows. This is one of the proteins that bind and probably mediate the attachment of the 5S RNA into the large ribosomal subunit, where it forms part of the central protuberance. In the 70S ribosome it contacts protein S13 of the 30S subunit (bridge B1b), connecting the 2 subunits; this bridge is implicated in subunit movement. Contacts the P site tRNA; the 5S rRNA and some of its associated proteins might help stabilize positioning of ribosome-bound tRNAs. In Acidothermus cellulolyticus (strain ATCC 43068 / DSM 8971 / 11B), this protein is Large ribosomal subunit protein uL5.